A 127-amino-acid polypeptide reads, in one-letter code: Aspartate 1-decarboxylase (127 aa).

Catalysis depends on Ser-25, which acts as the Schiff-base intermediate with substrate; via pyruvic acid. Ser-25 carries the pyruvic acid (Ser) modification. A substrate-binding site is contributed by Thr-57. The active-site Proton donor is the Tyr-58. 73 to 75 provides a ligand contact to substrate; the sequence is GAA.

Belongs to the PanD family. As to quaternary structure, heterooctamer of four alpha and four beta subunits. Pyruvate is required as a cofactor. Is synthesized initially as an inactive proenzyme, which is activated by self-cleavage at a specific serine bond to produce a beta-subunit with a hydroxyl group at its C-terminus and an alpha-subunit with a pyruvoyl group at its N-terminus.

The protein resides in the cytoplasm. It catalyses the reaction L-aspartate + H(+) = beta-alanine + CO2. The protein operates within cofactor biosynthesis; (R)-pantothenate biosynthesis; beta-alanine from L-aspartate: step 1/1. Functionally, catalyzes the pyruvoyl-dependent decarboxylation of aspartate to produce beta-alanine. This chain is Aspartate 1-decarboxylase, found in Listeria welshimeri serovar 6b (strain ATCC 35897 / DSM 20650 / CCUG 15529 / CIP 8149 / NCTC 11857 / SLCC 5334 / V8).